The chain runs to 133 residues: DNA-directed RNA polymerases I and III subunit RPAC2 (133 aa).

The residue at position 1 (Met1) is an N-acetylmethionine.

The protein belongs to the archaeal Rpo11/eukaryotic RPB11/RPC19 RNA polymerase subunit family. As to quaternary structure, component of the RNA polymerase I and RNA polymerase III complexes consisting of at least 13 and 17 subunits, respectively. Pol I complex consists of a ten-subunit catalytic core composed of POLR1A/RPA1, POLR1B/RPA2, POLR1C/RPAC1, POLR1D/RPAC2, POLR1H/RPA12, POLR2E/RPABC1, POLR2F/RPABC2, POLR2H/RPABC3, POLR2K/RPABC4 and POLR2L/RPABC5; a mobile stalk subunit POLR1F/RPA43 protruding from the core and additional subunits homologous to general transcription factors POLR1E/RPA49 and POLR1G/RPA34. Part of Pol I pre-initiation complex (PIC), in which Pol I core assembles with RRN3 and promoter-bound UTBF and SL1/TIF-IB complex. Pol III complex consists of a ten-subunit catalytic core composed of POLR3A/RPC1, POLR3B/RPC2, POLR1C/RPAC1, POLR1D/RPAC2, POLR3K/RPC10, POLR2E/RPABC1, POLR2F/RPABC2, POLR2H/RPABC3, POLR2K/RPABC4 and POLR2L/RPABC5; a mobile stalk composed of two subunits POLR3H/RPC8 and CRCP/RPC9, protruding from the core and functioning primarily in transcription initiation; and additional subunits homologous to general transcription factors of the RNA polymerase II machinery, POLR3C/RPC3-POLR3F/RPC6-POLR3G/RPC7 heterotrimer required for transcription initiation and POLR3D/RPC4-POLR3E/RPC5 heterodimer involved in both transcription initiation and termination.

The protein resides in the nucleus. The protein localises to the nucleolus. Functionally, DNA-dependent RNA polymerase catalyzes the transcription of DNA into RNA using the four ribonucleoside triphosphates as substrates. Common component of RNA polymerases I and III which synthesize ribosomal RNA precursors and short non-coding RNAs including 5S rRNA, snRNAs, tRNAs and miRNAs, respectively. This is DNA-directed RNA polymerases I and III subunit RPAC2 from Homo sapiens (Human).